Here is a 234-residue protein sequence, read N- to C-terminus: Thiamine import ATP-binding protein ThiQ (234 aa).

One can recognise an ABC transporter domain in the interval 2–230; sequence LTLQQVHYYY…HSHPELVEFF (229 aa). 32-39 serves as a coordination point for ATP; the sequence is GPSGAGKS.

It belongs to the ABC transporter superfamily. Thiamine importer (TC 3.A.1.19.1) family. The complex is composed of two ATP-binding proteins (ThiQ), two transmembrane proteins (ThiP) and a solute-binding protein (ThiB).

The protein resides in the cell inner membrane. The catalysed reaction is thiamine(out) + ATP + H2O = thiamine(in) + ADP + phosphate + H(+). In terms of biological role, part of the ABC transporter complex ThiBPQ involved in thiamine import. Responsible for energy coupling to the transport system. The protein is Thiamine import ATP-binding protein ThiQ of Vibrio vulnificus (strain CMCP6).